The chain runs to 222 residues: Pyridoxal phosphate homeostasis protein (222 aa).

Lys-35 carries the post-translational modification N6-(pyridoxal phosphate)lysine.

Belongs to the pyridoxal phosphate-binding protein YggS/PROSC family.

Functionally, pyridoxal 5'-phosphate (PLP)-binding protein, which is involved in PLP homeostasis. The sequence is that of Pyridoxal phosphate homeostasis protein from Helicobacter pylori (strain J99 / ATCC 700824) (Campylobacter pylori J99).